The primary structure comprises 182 residues: Isopentenyl-diphosphate Delta-isomerase (182 aa).

Mn(2+) contacts are provided by His25 and His32. In terms of domain architecture, Nudix hydrolase spans 30 to 164; sequence RLHLAFSSWL…PWAFSPWMVM (135 aa). The active site involves Cys67. Residue Cys67 participates in Mg(2+) binding. His69 contributes to the Mn(2+) binding site. Glu87 provides a ligand contact to Mg(2+). Glu114 and Glu116 together coordinate Mn(2+). The active site involves Glu116.

This sequence belongs to the IPP isomerase type 1 family. Homodimer. The cofactor is Mg(2+). Mn(2+) serves as cofactor.

It is found in the cytoplasm. The catalysed reaction is isopentenyl diphosphate = dimethylallyl diphosphate. It participates in isoprenoid biosynthesis; dimethylallyl diphosphate biosynthesis; dimethylallyl diphosphate from isopentenyl diphosphate: step 1/1. In terms of biological role, catalyzes the 1,3-allylic rearrangement of the homoallylic substrate isopentenyl (IPP) to its highly electrophilic allylic isomer, dimethylallyl diphosphate (DMAPP). The polypeptide is Isopentenyl-diphosphate Delta-isomerase (Shigella dysenteriae serotype 1 (strain Sd197)).